Reading from the N-terminus, the 215-residue chain is Probable phosphoglycerate mutase GpmB (215 aa).

Substrate is bound by residues 8–15 (RHGETLWN), 21–22 (QG), R58, 82–85 (ELNM), and 151–152 (GM). The Tele-phosphohistidine intermediate role is filled by H9. E82 acts as the Proton donor/acceptor in catalysis.

It belongs to the phosphoglycerate mutase family. GpmB subfamily.

It carries out the reaction (2R)-2-phosphoglycerate = (2R)-3-phosphoglycerate. It functions in the pathway carbohydrate degradation; glycolysis; pyruvate from D-glyceraldehyde 3-phosphate: step 3/5. The chain is Probable phosphoglycerate mutase GpmB from Yersinia pseudotuberculosis serotype O:1b (strain IP 31758).